The sequence spans 170 residues: Lipoprotein signal peptidase (170 aa).

4 helical membrane passes run 11-31, 41-61, 69-89, and 95-115; these read LGWL…KAHF, IVVI…AAFS, WQRW…VVWL, and DDTW…GNLY. Active-site residues include Asp125 and Asp144. A helical membrane pass occupies residues 136 to 156; sequence YFPAFNFADSAITVGAIMLAL.

Belongs to the peptidase A8 family.

Its subcellular location is the cell inner membrane. The catalysed reaction is Release of signal peptides from bacterial membrane prolipoproteins. Hydrolyzes -Xaa-Yaa-Zaa-|-(S,diacylglyceryl)Cys-, in which Xaa is hydrophobic (preferably Leu), and Yaa (Ala or Ser) and Zaa (Gly or Ala) have small, neutral side chains.. Its pathway is protein modification; lipoprotein biosynthesis (signal peptide cleavage). Functionally, this protein specifically catalyzes the removal of signal peptides from prolipoproteins. This chain is Lipoprotein signal peptidase, found in Pseudomonas fluorescens.